The sequence spans 343 residues: Anthranilate phosphoribosyltransferase (343 aa).

Residues glycine 84, 87–88 (GD), threonine 92, 94–97 (NIST), 112–120 (KHGNRGVSS), and serine 124 each bind 5-phospho-alpha-D-ribose 1-diphosphate. Anthranilate is bound at residue glycine 84. A Mg(2+)-binding site is contributed by serine 96. Asparagine 115 is a binding site for anthranilate. Position 170 (arginine 170) interacts with anthranilate. Mg(2+)-binding residues include aspartate 229 and glutamate 230.

Belongs to the anthranilate phosphoribosyltransferase family. As to quaternary structure, homodimer. It depends on Mg(2+) as a cofactor.

The enzyme catalyses N-(5-phospho-beta-D-ribosyl)anthranilate + diphosphate = 5-phospho-alpha-D-ribose 1-diphosphate + anthranilate. It participates in amino-acid biosynthesis; L-tryptophan biosynthesis; L-tryptophan from chorismate: step 2/5. In terms of biological role, catalyzes the transfer of the phosphoribosyl group of 5-phosphorylribose-1-pyrophosphate (PRPP) to anthranilate to yield N-(5'-phosphoribosyl)-anthranilate (PRA). The protein is Anthranilate phosphoribosyltransferase of Burkholderia pseudomallei (strain 1106a).